Consider the following 700-residue polypeptide: MKVREILVTSALPYANGDIHLGHLVEYIQTDIWVRSMKAQGHKVTYVCADDAHGTAIMLKAEDNGVTPEQQIANVQAAHEADFAKFLINFDNYHSTHSEENREFSELIYRRLRDTGHISTRDVEQLFDPEKQLFLADRFVKGTCPECAAPDQYGDNCEVCGTTYDATELKDPYSTLSNATPILKTSKHYFFDLPEFEQFLKDWTRSDNRLQVSVANKLQEWFDAGLTSWDISRDAPYFGFQIPDTPSDEPDKYFYVWLDAPVGYMASFKNLCDKRAGTDDALDFDHYWAQENEHKTEVYHFIGKDIVYFHALFWPAMLAGSELRTPTAVFAHGFLMVNGEKMSKSRGTFIKADTYAEHLHPEYLRYYFASKLSDKVEDINLDLEDFMQKVNSDLVGKVVNIASRSAGFLLKKYDGMLTDVCAEPSLLEDITKTGDEIAAAYENREFSRAMRLIMQCADKANEYIDEKKPWALAKVEGAEQEVQDVCSVAINIFRQLMVYLAPVLPELTANAKEFLNINDLSFASRNEWLLGHQINKFKPLMQRIDEKDVAAMVDASKASLTQVDAPTASQDDKMVAKNTAPAATPSSTEQADYIGIEDFAKVEMKVAHVIACSYVEGADKLLQFTLDVGEAQPRNVFSGIRKFYEPEQLLDKKVICVTNLAPRKMKFGISEGMILSSGDPKTQLTVVTLPDNCVIGDLLA.

The 'HIGH' region signature appears at 13 to 23 (PYANGDIHLGH). Zn(2+) contacts are provided by C144, C147, C157, and C160. The 'KMSKS' region signature appears at 341–345 (KMSKS). K344 contacts ATP. The region spanning 598–700 (DFAKVEMKVA…DNCVIGDLLA (103 aa)) is the tRNA-binding domain.

It belongs to the class-I aminoacyl-tRNA synthetase family. MetG type 1 subfamily. Homodimer. Requires Zn(2+) as cofactor.

It localises to the cytoplasm. It catalyses the reaction tRNA(Met) + L-methionine + ATP = L-methionyl-tRNA(Met) + AMP + diphosphate. Its function is as follows. Is required not only for elongation of protein synthesis but also for the initiation of all mRNA translation through initiator tRNA(fMet) aminoacylation. This is Methionine--tRNA ligase from Psychrobacter arcticus (strain DSM 17307 / VKM B-2377 / 273-4).